The primary structure comprises 507 residues: MVTIRADEISNIIRERIEQYNREVKIVNTGTVLQVGDGIARIHGLDEVMAGELVEFEEGTIGIAPNSESNNVGVVLMGDGLMIQEGSSVKATGRIAQIPVSEAYLGRVINALAKPIDGRGEISASESRLIESPAPGIISRRSVYEPLQTGLIAIDSMIPIGRGQRELIIGDRQTGKTAVATDTILNQKGQNVICVYVAIGQKASSVAQVVTTFQERGAMEYTIVVAETADSPATLQYLAPYTGAALAEYFMYRERHTLIIYDDPSKQAQAYRQMSLLLRRPPGREAYPGDVFYLHSRLLERAAKSSSRLGEGSMTALPIVETQSGDVSAYIPTNVISITDGQIFLSADLFNAGIRPAINVGISVSRVGSAAQIKAMKQVAGKSKLELAQFAELEAFAQFASDLDKATQNQLARGQRLRELLKQSQSAPFTVEEQIVTIYTGANGYLDLLEIGQVKKFLVQLRTHLRTNKPQFQEIICSTRTFTEQAEALLKEAIQEQIELFLLQEQA.

ATP is bound at residue 170-177 (GDRQTGKT).

This sequence belongs to the ATPase alpha/beta chains family. In terms of assembly, F-type ATPases have 2 components, CF(1) - the catalytic core - and CF(0) - the membrane proton channel. CF(1) has five subunits: alpha(3), beta(3), gamma(1), delta(1), epsilon(1). CF(0) has four main subunits: a, b, b' and c.

It is found in the plastid. The protein resides in the chloroplast thylakoid membrane. It carries out the reaction ATP + H2O + 4 H(+)(in) = ADP + phosphate + 5 H(+)(out). Produces ATP from ADP in the presence of a proton gradient across the membrane. The alpha chain is a regulatory subunit. This Illicium oligandrum (Star anise) protein is ATP synthase subunit alpha, chloroplastic.